The sequence spans 72 residues: Small ribosomal subunit protein bS18 (72 aa).

This sequence belongs to the bacterial ribosomal protein bS18 family. Part of the 30S ribosomal subunit. Forms a tight heterodimer with protein bS6.

In terms of biological role, binds as a heterodimer with protein bS6 to the central domain of the 16S rRNA, where it helps stabilize the platform of the 30S subunit. The sequence is that of Small ribosomal subunit protein bS18 from Trichodesmium erythraeum (strain IMS101).